Here is a 203-residue protein sequence, read N- to C-terminus: Guanylate kinase (203 aa).

A Guanylate kinase-like domain is found at 3–181 (GTLYIVAAPS…AVSEMCAIFT (179 aa)). 10–17 (APSGAGKS) is an ATP binding site.

Belongs to the guanylate kinase family.

It is found in the cytoplasm. It carries out the reaction GMP + ATP = GDP + ADP. Functionally, essential for recycling GMP and indirectly, cGMP. The protein is Guanylate kinase of Xanthomonas axonopodis pv. citri (strain 306).